Consider the following 73-residue polypeptide: UPF0154 protein BCG9842_B1526 (73 aa).

A helical membrane pass occupies residues 3–23; it reads IWLGILVGVVALVAGVALGFF.

This sequence belongs to the UPF0154 family.

The protein resides in the cell membrane. This is UPF0154 protein BCG9842_B1526 from Bacillus cereus (strain G9842).